The sequence spans 104 residues: UPF0235 protein MTH_637 (104 aa).

This sequence belongs to the UPF0235 family.

In Methanothermobacter thermautotrophicus (strain ATCC 29096 / DSM 1053 / JCM 10044 / NBRC 100330 / Delta H) (Methanobacterium thermoautotrophicum), this protein is UPF0235 protein MTH_637.